The primary structure comprises 228 residues: Small ribosomal subunit protein uS2 (228 aa).

This sequence belongs to the universal ribosomal protein uS2 family.

This Buchnera aphidicola subsp. Baizongia pistaciae (strain Bp) protein is Small ribosomal subunit protein uS2.